The primary structure comprises 612 residues: Protein tipD (612 aa).

The disordered stretch occupies residues 95-128 (RNEKKTQQQPPSGSSKMDSSSSSSSSNRVSGMGS). The segment covering 106–128 (SGSSKMDSSSSSSSSNRVSGMGS) has biased composition (low complexity). 7 WD repeats span residues 322–361 (GHNS…QKST), 364–403 (GASQ…SRHT), 406–444 (GHIG…CTRT), 447–486 (CFSS…PTQV), 490–530 (IHEG…TIRT), 535–576 (EYRN…TVKV), and 582–611 (NNGS…IIQW).

The protein belongs to the WD repeat tipD family.

Functionally, not known; disruption of the gene for tipD results in morphological defects. The polypeptide is Protein tipD (tipD) (Dictyostelium discoideum (Social amoeba)).